The sequence spans 143 residues: Large ribosomal subunit protein uL11 (143 aa).

The protein belongs to the universal ribosomal protein uL11 family. Part of the ribosomal stalk of the 50S ribosomal subunit. Interacts with L10 and the large rRNA to form the base of the stalk. L10 forms an elongated spine to which L12 dimers bind in a sequential fashion forming a multimeric L10(L12)X complex. In terms of processing, one or more lysine residues are methylated.

Forms part of the ribosomal stalk which helps the ribosome interact with GTP-bound translation factors. The chain is Large ribosomal subunit protein uL11 from Pseudomonas fluorescens (strain Pf0-1).